The primary structure comprises 433 residues: E3 ubiquitin-protein ligase RNF26 (433 aa).

5 helical membrane-spanning segments follow: residues 24–44 (LNFLLVSSLLASLAWLLAFVY), 60–80 (GVLLSLLALIEAVVRFTCGGL), 147–169 (VINSLVNICLIGTQNLFSLVLAL), 183–203 (VVAAFLAHISSSAVAMAILLW), and 220–240 (LASFVLVNLTGLVLLACVLAV). An RING-type zinc finger spans residues 380–422 (CVICQDQSKTVLLLPCRHLCLCQACTEILMRHPVYHRNCPLCR).

As to quaternary structure, interacts with INCA1. Interacts with TMEM43, ENDOD1, TMEM33 and TMED1 to form a complex capable of modulating innate immune signaling through the cGAS-STING pathway. Interacts with UBE2J1; this interaction is important for SQSTM1 ubiquitination. Ubiquitous. Up-regulated in several cancer cell lines.

The protein resides in the endoplasmic reticulum membrane. It carries out the reaction S-ubiquitinyl-[E2 ubiquitin-conjugating enzyme]-L-cysteine + [acceptor protein]-L-lysine = [E2 ubiquitin-conjugating enzyme]-L-cysteine + N(6)-ubiquitinyl-[acceptor protein]-L-lysine.. Its pathway is protein modification; protein ubiquitination. In terms of biological role, E3 ubiquitin-protein ligase that plays a key role in endosome organization by retaining vesicles in the perinuclear cloud. Acts as a platform for perinuclear positioning of the endosomal system by mediating ubiquitination of SQSTM1 through interaction with the ubiquitin conjugating enzyme UBE2J1. Ubiquitinated SQSTM1 attracts specific vesicle-associated adapters, forming a molecular bridge that restrains cognate vesicles in the perinuclear region and organizes the endosomal pathway for efficient cargo transport. Also acts as a regulator of type I interferon production in response to viral infection by mediating the formation of 'Lys-11'-linked polyubiquitin chains on TMEM173/STING, leading to stabilize TMEM173/STING. Also required to limit type I interferon response by promoting autophagic degradation of IRF3. The protein is E3 ubiquitin-protein ligase RNF26 of Homo sapiens (Human).